We begin with the raw amino-acid sequence, 278 residues long: Diaminopimelate epimerase (278 aa).

Asn-11 and Asn-75 together coordinate substrate. Catalysis depends on Cys-84, which acts as the Proton donor. Residues 85-86 (GN), Asn-160, Asn-195, and 213-214 (ER) each bind substrate. Catalysis depends on Cys-222, which acts as the Proton acceptor. Residue 223-224 (GT) participates in substrate binding.

This sequence belongs to the diaminopimelate epimerase family. As to quaternary structure, homodimer.

Its subcellular location is the cytoplasm. The enzyme catalyses (2S,6S)-2,6-diaminopimelate = meso-2,6-diaminopimelate. Its pathway is amino-acid biosynthesis; L-lysine biosynthesis via DAP pathway; DL-2,6-diaminopimelate from LL-2,6-diaminopimelate: step 1/1. In terms of biological role, catalyzes the stereoinversion of LL-2,6-diaminopimelate (L,L-DAP) to meso-diaminopimelate (meso-DAP), a precursor of L-lysine and an essential component of the bacterial peptidoglycan. This chain is Diaminopimelate epimerase, found in Corynebacterium aurimucosum (strain ATCC 700975 / DSM 44827 / CIP 107346 / CN-1) (Corynebacterium nigricans).